The primary structure comprises 455 residues: Bleomycin hydrolase (455 aa).

Residues cysteine 73, histidine 372, and asparagine 396 contribute to the active site.

Belongs to the peptidase C1 family. Homooctamer.

The protein localises to the cytoplasm. It carries out the reaction Inactivates bleomycin B2 (a cytotoxic glycometallopeptide) by hydrolysis of a carboxyamide bond of beta-aminoalanine, but also shows general aminopeptidase activity. The specificity varies somewhat with source, but amino acid arylamides of Met, Leu and Ala are preferred.. The normal physiological role of BLM hydrolase is unknown, but it catalyzes the inactivation of the antitumor drug BLM (a glycopeptide) by hydrolyzing the carboxamide bond of its B-aminoalaninamide moiety thus protecting normal and malignant cells from BLM toxicity. The protein is Bleomycin hydrolase (BLMH) of Gallus gallus (Chicken).